Here is a 212-residue protein sequence, read N- to C-terminus: Histidine biosynthesis bifunctional protein HisIE (212 aa).

Residues 1-109 (MRPDFHKQEL…ELIPFDDSDI (109 aa)) are phosphoribosyl-AMP cyclohydrolase. Residues 110–212 (FSELEKQIID…KKEFHTRTAD (103 aa)) form a phosphoribosyl-ATP pyrophosphohydrolase region.

It in the N-terminal section; belongs to the PRA-CH family. This sequence in the C-terminal section; belongs to the PRA-PH family.

Its subcellular location is the cytoplasm. It catalyses the reaction 1-(5-phospho-beta-D-ribosyl)-ATP + H2O = 1-(5-phospho-beta-D-ribosyl)-5'-AMP + diphosphate + H(+). The catalysed reaction is 1-(5-phospho-beta-D-ribosyl)-5'-AMP + H2O = 1-(5-phospho-beta-D-ribosyl)-5-[(5-phospho-beta-D-ribosylamino)methylideneamino]imidazole-4-carboxamide. It participates in amino-acid biosynthesis; L-histidine biosynthesis; L-histidine from 5-phospho-alpha-D-ribose 1-diphosphate: step 2/9. Its pathway is amino-acid biosynthesis; L-histidine biosynthesis; L-histidine from 5-phospho-alpha-D-ribose 1-diphosphate: step 3/9. In Lactococcus lactis subsp. lactis (strain IL1403) (Streptococcus lactis), this protein is Histidine biosynthesis bifunctional protein HisIE (hisI).